The primary structure comprises 68 residues: DNA gyrase inhibitor YacG (68 aa).

Zn(2+)-binding residues include C10, C13, C29, and C33.

This sequence belongs to the DNA gyrase inhibitor YacG family. Interacts with GyrB. It depends on Zn(2+) as a cofactor.

Its function is as follows. Inhibits all the catalytic activities of DNA gyrase by preventing its interaction with DNA. Acts by binding directly to the C-terminal domain of GyrB, which probably disrupts DNA binding by the gyrase. The polypeptide is DNA gyrase inhibitor YacG (Haemophilus influenzae (strain PittGG)).